A 495-amino-acid polypeptide reads, in one-letter code: Formin-like protein 17 (495 aa).

Positions 1-92 are disordered; the sequence is MDIRELIDIT…HNLKGQGQTR (92 aa). The span at 19–29 shows a compositional bias: pro residues; it reads GPPPPPPPPLL. A compositionally biased stretch (low complexity) spans 30-39; it reads QPHHSALSSS. The FH2 domain maps to 86–486; it reads KGQGQTRKAN…RAQKEAENEK (401 aa).

This sequence belongs to the formin-like family. Class-II subfamily.

The chain is Formin-like protein 17 (FH17) from Arabidopsis thaliana (Mouse-ear cress).